The primary structure comprises 77 residues: UPF0248 protein Pcal_0252 (77 aa).

It belongs to the UPF0248 family.

The protein is UPF0248 protein Pcal_0252 of Pyrobaculum calidifontis (strain DSM 21063 / JCM 11548 / VA1).